Here is a 67-residue protein sequence, read N- to C-terminus: Large ribosomal subunit protein uL29 (67 aa).

This sequence belongs to the universal ribosomal protein uL29 family.

The polypeptide is Large ribosomal subunit protein uL29 (Clostridioides difficile (strain 630) (Peptoclostridium difficile)).